We begin with the raw amino-acid sequence, 1447 residues long: DNA topoisomerase 2 (1447 aa).

Residues N72, N101, 129–131 (SSN), and 142–149 (GRNGYGAK) contribute to the ATP site. The interaction with DNA stretch occupies residues 323-325 (KKK). 357-359 (QTK) contributes to the ATP binding site. A Toprim domain is found at 435 to 552 (CTLILTEGDS…ELLRLPFLEE (118 aa)). The Mg(2+) site is built by E441, D521, and D523. Positions 695–1169 (IPSLVDGLKP…TPEMLWLDDL (475 aa)) constitute a Topo IIA-type catalytic domain. Catalysis depends on Y785, which acts as the O-(5'-phospho-DNA)-tyrosine intermediate. An interaction with DNA region spans residues 972-981 (KLTTTLSTNQ). Disordered stretches follow at residues 1079–1110 (EDAE…EVDP), 1183–1231 (ERAE…DGEP), and 1246–1447 (AAAK…DFNC). The span at 1081–1094 (AEQADEEDEEEEEA) shows a compositional bias: acidic residues. Over residues 1255–1281 (KEPKKPKEPKEPKVKKEPKGKQIKAEP) the composition is skewed to basic and acidic residues. Over residues 1283–1293 (ASGDEVDEFDA) the composition is skewed to acidic residues. Residue S1284 is modified to Phosphoserine. Composition is skewed to basic and acidic residues over residues 1310–1325 (VKKE…KKEN) and 1332–1359 (SKID…ERPG). S1344 carries the phosphoserine modification. T1352 carries the post-translational modification Phosphothreonine. 4 positions are modified to phosphoserine: S1374, S1385, S1392, and S1396. Positions 1374–1394 (SDEEEDGGNVGSDDDGNASDD) are enriched in acidic residues. Basic and acidic residues predominate over residues 1395-1408 (DSPKRPAKRGREDE). The span at 1413–1423 (AKKKAPPKKRR) shows a compositional bias: basic residues. The segment covering 1427 to 1447 (ESDDDDIEIDEDDDDDSDFNC) has biased composition (acidic residues).

Belongs to the type II topoisomerase family. As to quaternary structure, homodimer. Interacts with mod(mdg4). Interacts with barr. Interacts with ph-p. Interacts with mle; the interaction mediates association with the MSL dosage compensation complex. Requires Mg(2+) as cofactor. It depends on Mn(2+) as a cofactor. Ca(2+) serves as cofactor. In terms of processing, phosphorylated. Phosphorylation by casein kinase II enhances ATPase activity.

It is found in the nucleus. The protein localises to the chromosome. The protein resides in the cytoplasm. The enzyme catalyses ATP-dependent breakage, passage and rejoining of double-stranded DNA.. In terms of biological role, control of topological states of DNA by transient breakage and subsequent rejoining of DNA strands. Topoisomerase II makes double-strand breaks. Essential during mitosis and meiosis for proper segregation of daughter chromosomes. During meiosis, it disrupts heterochromatic connections between achiasmate and chiasmate homologs after spindle assembly so that chromosomes can separate at prometaphase I. During mitosis, it functions in the separation of sister chromatids by establishing amphitelic kinetochore attachments in mitotic spindles. May have a role in chromatin condensation and chromosome structure. May be involved in X-chromosome dosage compensation, perhaps by modifying the topological state of compensated genes. Regulates activity of the gypsy chromatin insulator complex by binding to mod(mdg4) and preventing its degradation. This Drosophila melanogaster (Fruit fly) protein is DNA topoisomerase 2.